Here is a 351-residue protein sequence, read N- to C-terminus: Histidinol-phosphate aminotransferase (351 aa).

The interval 1-26 is disordered; that stretch reads MRFRAELEPLSPYNPPRASQEAAAER. Position 223 is an N6-(pyridoxal phosphate)lysine (Lys223).

It belongs to the class-II pyridoxal-phosphate-dependent aminotransferase family. Histidinol-phosphate aminotransferase subfamily. As to quaternary structure, homodimer. Pyridoxal 5'-phosphate is required as a cofactor.

The catalysed reaction is L-histidinol phosphate + 2-oxoglutarate = 3-(imidazol-4-yl)-2-oxopropyl phosphate + L-glutamate. It functions in the pathway amino-acid biosynthesis; L-histidine biosynthesis; L-histidine from 5-phospho-alpha-D-ribose 1-diphosphate: step 7/9. In Rubrobacter xylanophilus (strain DSM 9941 / JCM 11954 / NBRC 16129 / PRD-1), this protein is Histidinol-phosphate aminotransferase.